The following is a 127-amino-acid chain: MPTIQQLVRIGRTKMTKKSKSVALDSCPQRRGVCTRVYTTTPKKPNSAMRKVARVRLTNGNEVNAYIPGEGHNLQEHSIVLVRGGRVKDLPGVRYHIVRGALDTSGVAGRTQRRSKYGAKRPKEAKK.

Aspartate 89 is subject to 3-methylthioaspartic acid. Residues 101-127 (ALDTSGVAGRTQRRSKYGAKRPKEAKK) are disordered. The segment covering 111–127 (TQRRSKYGAKRPKEAKK) has biased composition (basic residues).

Belongs to the universal ribosomal protein uS12 family. Part of the 30S ribosomal subunit. Contacts proteins S8 and S17. May interact with IF1 in the 30S initiation complex.

In terms of biological role, with S4 and S5 plays an important role in translational accuracy. Functionally, interacts with and stabilizes bases of the 16S rRNA that are involved in tRNA selection in the A site and with the mRNA backbone. Located at the interface of the 30S and 50S subunits, it traverses the body of the 30S subunit contacting proteins on the other side and probably holding the rRNA structure together. The combined cluster of proteins S8, S12 and S17 appears to hold together the shoulder and platform of the 30S subunit. The sequence is that of Small ribosomal subunit protein uS12 from Flavobacterium psychrophilum (strain ATCC 49511 / DSM 21280 / CIP 103535 / JIP02/86).